Consider the following 161-residue polypeptide: UPF0262 protein SPOA0072 (161 aa).

Residues M1–P21 form a disordered region.

It belongs to the UPF0262 family.

In Ruegeria pomeroyi (strain ATCC 700808 / DSM 15171 / DSS-3) (Silicibacter pomeroyi), this protein is UPF0262 protein SPOA0072.